A 379-amino-acid chain; its full sequence is Homoserine O-succinyltransferase (379 aa).

One can recognise an AB hydrolase-1 domain in the interval 51-360 (NAVLICHALS…DAPQGHDAFL (310 aa)). The active-site Nucleophile is the serine 157. Arginine 227 contacts substrate. Catalysis depends on residues aspartate 323 and histidine 356. Residue aspartate 357 participates in substrate binding.

It belongs to the AB hydrolase superfamily. MetX family. Homodimer.

Its subcellular location is the cytoplasm. The catalysed reaction is L-homoserine + succinyl-CoA = O-succinyl-L-homoserine + CoA. It functions in the pathway amino-acid biosynthesis; L-methionine biosynthesis via de novo pathway; O-succinyl-L-homoserine from L-homoserine: step 1/1. In terms of biological role, transfers a succinyl group from succinyl-CoA to L-homoserine, forming succinyl-L-homoserine. The protein is Homoserine O-succinyltransferase of Pseudomonas fluorescens (strain ATCC BAA-477 / NRRL B-23932 / Pf-5).